The sequence spans 93 residues: uncharacterized protein (93 aa).

Residues 20-40 (VYIYLCFSLMTIALICYLIHI) form a helical membrane-spanning segment. A glycan (N-linked (GlcNAc...) asparagine; by host) is linked at N78.

It belongs to the asfivirus KP93L family.

The protein resides in the host membrane. This is an uncharacterized protein from Ornithodoros (relapsing fever ticks).